The following is a 245-amino-acid chain: MYSVDLHMHTVASTHAYSTLHDYIAQAVARGLRLFAITDHGPEMADAPHPWHFMNMRVWPRTVNGVGILRGIEANIKSRQGDIDCHGRMLAEMDVVIAGFHEPVLAPVDRAFHTEALLATIARGEADIISHPGNPKYPLDIPAVARAAAEHGVALELNNSSFSHSRAGSADNCRTIAAAVRDAGGWLSLGSDAHIAFDMGNFNHCIRVLNEVNFPPERVLNASPRRVLDFLQRRGRPVIPEFADW.

Zn(2+) is bound by residues histidine 7, histidine 9, histidine 15, histidine 40, glutamate 73, histidine 101, histidine 131, aspartate 192, and histidine 194.

It belongs to the PHP family. Homotrimer. Zn(2+) is required as a cofactor.

The polypeptide is Probable phosphatase NT01EI_1577 (Edwardsiella ictaluri (strain 93-146)).